The sequence spans 407 residues: Putative membrane protein 047R (407 aa).

The disordered stretch occupies residues 265–337; that stretch reads INCVFKPDPP…PPKPTPPPPI (73 aa). Positions 271-337 are enriched in pro residues; it reads PDPPPQPKPQ…PPKPTPPPPI (67 aa). 2 helical membrane passes run 355-372 and 385-403; these read NWIM…VIYP and NAAI…QSYV.

Belongs to the IIV-6 337L family.

It localises to the virion membrane. The polypeptide is Putative membrane protein 047R (Aedes vexans (Inland floodwater mosquito)).